Consider the following 433-residue polypeptide: Serine--tRNA ligase (433 aa).

235 to 237 (TSE) contacts L-serine. Residue 266-268 (RSE) participates in ATP binding. Residue glutamate 289 coordinates L-serine. 353 to 356 (EISS) provides a ligand contact to ATP. Serine 388 lines the L-serine pocket.

Belongs to the class-II aminoacyl-tRNA synthetase family. Type-1 seryl-tRNA synthetase subfamily. Homodimer. The tRNA molecule binds across the dimer.

It localises to the cytoplasm. It catalyses the reaction tRNA(Ser) + L-serine + ATP = L-seryl-tRNA(Ser) + AMP + diphosphate + H(+). The catalysed reaction is tRNA(Sec) + L-serine + ATP = L-seryl-tRNA(Sec) + AMP + diphosphate + H(+). It functions in the pathway aminoacyl-tRNA biosynthesis; selenocysteinyl-tRNA(Sec) biosynthesis; L-seryl-tRNA(Sec) from L-serine and tRNA(Sec): step 1/1. Catalyzes the attachment of serine to tRNA(Ser). Is also able to aminoacylate tRNA(Sec) with serine, to form the misacylated tRNA L-seryl-tRNA(Sec), which will be further converted into selenocysteinyl-tRNA(Sec). The polypeptide is Serine--tRNA ligase (Burkholderia ambifaria (strain MC40-6)).